The sequence spans 752 residues: Coiled-coil domain-containing protein 157 (752 aa).

A compositionally biased stretch (polar residues) spans 135-154 (QQPLPQKGANQRETPTSKPT). Disordered stretches follow at residues 135-163 (QQPLPQKGANQRETPTSKPTTKGEPARSP) and 316-336 (QALKQEQGARRRQAEEDEQCL). Coiled coils occupy residues 276 to 544 (AAEQ…LLVA) and 579 to 615 (DHMERQVQSNDIRIRVLQEENGRLQSMLSKIREVAQQ). A compositionally biased stretch (basic and acidic residues) spans 316 to 329 (QALKQEQGARRRQA). 2 disordered regions span residues 620-707 (LIPQ…QPSK) and 731-752 (RKRLSPGRGQASSAHQPQERPM). Positions 628 to 648 (SPSSKGTQGATPPVQAKSTSP) are enriched in polar residues. Residues 671-692 (TSPPRQPCTSPPRQPCTSPPRQ) are compositionally biased toward pro residues. Polar residues predominate over residues 693–707 (PCTSPSRQPCSQPSK).

This is Coiled-coil domain-containing protein 157 (CCDC157) from Homo sapiens (Human).